A 107-amino-acid chain; its full sequence is Nucleoid-associated protein RP866 (107 aa).

It belongs to the YbaB/EbfC family. In terms of assembly, homodimer.

Its subcellular location is the cytoplasm. The protein localises to the nucleoid. In terms of biological role, binds to DNA and alters its conformation. May be involved in regulation of gene expression, nucleoid organization and DNA protection. In Rickettsia prowazekii (strain Madrid E), this protein is Nucleoid-associated protein RP866.